Consider the following 282-residue polypeptide: Pantothenate synthetase (282 aa).

30-37 (MGYLHEGH) is a binding site for ATP. His-37 acts as the Proton donor in catalysis. Gln-61 lines the (R)-pantoate pocket. Residue Gln-61 participates in beta-alanine binding. ATP is bound at residue 147 to 150 (GMKD). Gln-153 is a (R)-pantoate binding site. ATP-binding positions include Val-176 and 184 to 187 (KSSR).

It belongs to the pantothenate synthetase family. In terms of assembly, homodimer.

It localises to the cytoplasm. The catalysed reaction is (R)-pantoate + beta-alanine + ATP = (R)-pantothenate + AMP + diphosphate + H(+). Its pathway is cofactor biosynthesis; (R)-pantothenate biosynthesis; (R)-pantothenate from (R)-pantoate and beta-alanine: step 1/1. In terms of biological role, catalyzes the condensation of pantoate with beta-alanine in an ATP-dependent reaction via a pantoyl-adenylate intermediate. The protein is Pantothenate synthetase of Geobacillus sp. (strain WCH70).